The primary structure comprises 51 residues: Large ribosomal subunit protein eL39 (51 aa).

Belongs to the eukaryotic ribosomal protein eL39 family. As to quaternary structure, interacts with impact.

This Ictalurus punctatus (Channel catfish) protein is Large ribosomal subunit protein eL39 (rpl39).